Here is a 115-residue protein sequence, read N- to C-terminus: Putative UPF0377 protein YHL045W (115 aa).

Residues 10–30 form a helical membrane-spanning segment; it reads ACIFIDSVCEGIVFWGLCLFV.

It belongs to the UPF0377 family.

Its subcellular location is the membrane. This chain is Putative UPF0377 protein YHL045W, found in Saccharomyces cerevisiae (strain ATCC 204508 / S288c) (Baker's yeast).